Reading from the N-terminus, the 294-residue chain is 4-hydroxy-tetrahydrodipicolinate synthase (294 aa).

Residue T47 participates in pyruvate binding. Y135 functions as the Proton donor/acceptor in the catalytic mechanism. K163 (schiff-base intermediate with substrate) is an active-site residue. Position 206 (I206) interacts with pyruvate.

The protein belongs to the DapA family. In terms of assembly, homodimer.

It localises to the cytoplasm. The enzyme catalyses L-aspartate 4-semialdehyde + pyruvate = (2S,4S)-4-hydroxy-2,3,4,5-tetrahydrodipicolinate + H2O + H(+). It participates in amino-acid biosynthesis; L-lysine biosynthesis via DAP pathway; (S)-tetrahydrodipicolinate from L-aspartate: step 3/4. Functionally, catalyzes the condensation of (S)-aspartate-beta-semialdehyde [(S)-ASA] and pyruvate to 4-hydroxy-tetrahydrodipicolinate (HTPA). This is 4-hydroxy-tetrahydrodipicolinate synthase from Staphylococcus haemolyticus (strain JCSC1435).